The following is a 430-amino-acid chain: Multisubstrate adapter protein soc-1 (430 aa).

A PH domain is found at Asn-7–Lys-133. A compositionally biased stretch (low complexity) spans Ser-192–Ser-222. 3 disordered regions span residues Ser-192–Thr-246, Glu-275–Phe-303, and Arg-315–Asp-377. Residues Arg-341–Glu-369 are compositionally biased toward polar residues.

Interacts (via C-terminus) with sem-5 (probably via SH3 domain 2). Interacts with nicotinic acetylcholine receptor. May be phosphorylated.

Functionally, adapter protein which modulates signaling mediated by several receptor tyrosine kinases. Plays a role in fluid homeostasis, probably downstream of receptor egl-15 and upstream of let-60/Ras. Involved in nicotinic acetylcholine receptor (nAChR)-mediated sensitivity to nicotine and levamisole and gamma-aminobutyric acid (GABA)receptor-mediated sensitivity to muscimol. Regulates synaptic levels of nAchR receptor subunit lev-1 and unc-38, and GABA receptor subunit unc-49 in the nerve cord, probably downstream of egl-15. Regulates motility. During the formation of neuromuscular junctions at the larval stage, down-regulates membrane protrusion from body wall muscles, probably downstream of egl-15. Promotes vulva induction and down-regulates fertility, probably downstream of receptor let-23. Down-regulates daf-2-mediated repression of dauer formation and positively regulates daf-2-mediated aging. May be involved in the recruitment of phosphatase ptp-2 to egl-15. This chain is Multisubstrate adapter protein soc-1, found in Caenorhabditis elegans.